Here is a 327-residue protein sequence, read N- to C-terminus: Glutamyl endopeptidase (327 aa).

The first 29 residues, 1–29 (MKGKFLKVSSLFVATLTTATLVSSPAANA), serve as a signal peptide directing secretion. Positions 30 to 68 (LSSKAMDNHPQQSQSSKQQTPKIQKGGNLKPLEQREHAN) are excised as a propeptide. The disordered stretch occupies residues 33–61 (KAMDNHPQQSQSSKQQTPKIQKGGNLKPL). Positions 40-54 (QQSQSSKQQTPKIQK) are enriched in low complexity. Catalysis depends on charge relay system residues His119, Asp161, and Ser237. The tract at residues 283-327 (FANDDQPNNPDNPDNPNNPDNPNNPNNPDNPDNGDNNNSDNPDAA) is disordered. Low complexity predominate over residues 286-327 (DDQPNNPDNPDNPNNPDNPNNPNNPDNPDNGDNNNSDNPDAA). Tandem repeats lie at residues 289–291 (PNN), 292–294 (PDN), 295–297 (PDN), 298–300 (PNN), 301–303 (PDN), 304–306 (PNN), 307–309 (PNN), 310–312 (PDN), and 313–315 (PDN). Positions 289–315 (PNNPDNPDNPNNPDNPNNPNNPDNPDN) are 9 X 3 AA repeats of P-[DN]-N.

This sequence belongs to the peptidase S1B family. In terms of processing, proteolytically cleaved by aureolysin (aur). This cleavage leads to the activation of SspA.

It is found in the secreted. The catalysed reaction is Preferential cleavage: Glu-|-Xaa, Asp-|-Xaa.. Functionally, preferentially cleaves peptide bonds on the carboxyl-terminal side of aspartate and glutamate. Along with other extracellular proteases it is involved in colonization and infection of human tissues. Required for proteolytic maturation of thiol protease SspB and inactivation of SspC, an inhibitor of SspB. It is the most important protease for degradation of fibronectin-binding protein (FnBP) and surface protein A, which are involved in adherence to host cells. May also protect bacteria against host defense mechanism by cleaving the immunoglobulin classes IgG, IgA and IgM. May be involved in the stability of secreted lipases. In Staphylococcus aureus (strain MW2), this protein is Glutamyl endopeptidase (sspA).